The primary structure comprises 314 residues: MEKIGNDYHIPVLYYETLDNLVINPDGTYIDCTLGGGSHSEGILERLSDKGLLISIDQDTNAIEYSKKRLEKFGSKWKVFKGNFENIDTIAYMAGVDKVDGILMDIGVSSKQLDDPDRGFSYRYDVKLDMRMNTDQKISAYDVVNTYSEEQLSKIIFEYGEERHARKIAKLIVEERKSSPIEKTSDLITLIKRAYPERASKHPAKKTFQAIRIEVNRELEVLENAMSKAVELLKVGGRLAIITFHSLEDRIVKNKFKDLATACKCPKDIPICVCGGVKKFEIITKKPIIPIDDELKNNNRAHSSKLRILERIFD.

S-adenosyl-L-methionine is bound by residues Gly37 to His39, Asp57, Phe84, Asp105, and Gln112.

Belongs to the methyltransferase superfamily. RsmH family.

It is found in the cytoplasm. The enzyme catalyses cytidine(1402) in 16S rRNA + S-adenosyl-L-methionine = N(4)-methylcytidine(1402) in 16S rRNA + S-adenosyl-L-homocysteine + H(+). Its function is as follows. Specifically methylates the N4 position of cytidine in position 1402 (C1402) of 16S rRNA. This chain is Ribosomal RNA small subunit methyltransferase H, found in Fusobacterium nucleatum subsp. nucleatum (strain ATCC 25586 / DSM 15643 / BCRC 10681 / CIP 101130 / JCM 8532 / KCTC 2640 / LMG 13131 / VPI 4355).